A 236-amino-acid chain; its full sequence is 2-C-methyl-D-erythritol 4-phosphate cytidylyltransferase (236 aa).

Belongs to the IspD/TarI cytidylyltransferase family. IspD subfamily. In terms of assembly, homodimer.

The enzyme catalyses 2-C-methyl-D-erythritol 4-phosphate + CTP + H(+) = 4-CDP-2-C-methyl-D-erythritol + diphosphate. The protein operates within isoprenoid biosynthesis; isopentenyl diphosphate biosynthesis via DXP pathway; isopentenyl diphosphate from 1-deoxy-D-xylulose 5-phosphate: step 2/6. Functionally, catalyzes the formation of 4-diphosphocytidyl-2-C-methyl-D-erythritol from CTP and 2-C-methyl-D-erythritol 4-phosphate (MEP). The sequence is that of 2-C-methyl-D-erythritol 4-phosphate cytidylyltransferase from Buchnera aphidicola subsp. Schizaphis graminum (strain Sg).